We begin with the raw amino-acid sequence, 187 residues long: UPF0301 protein CKO_04323 (187 aa).

It belongs to the UPF0301 (AlgH) family.

The chain is UPF0301 protein CKO_04323 from Citrobacter koseri (strain ATCC BAA-895 / CDC 4225-83 / SGSC4696).